The chain runs to 258 residues: 5'-nucleotidase SurE (258 aa).

A divalent metal cation contacts are provided by Asp-9, Asp-10, Ser-42, and Asn-96.

Belongs to the SurE nucleotidase family. A divalent metal cation serves as cofactor.

The protein localises to the cytoplasm. The enzyme catalyses a ribonucleoside 5'-phosphate + H2O = a ribonucleoside + phosphate. Nucleotidase that shows phosphatase activity on nucleoside 5'-monophosphates. The protein is 5'-nucleotidase SurE of Campylobacter jejuni subsp. jejuni serotype O:2 (strain ATCC 700819 / NCTC 11168).